Here is an 831-residue protein sequence, read N- to C-terminus: uncharacterized protein (831 aa).

Histidine 787 functions as the Tele-phosphohistidine intermediate in the catalytic mechanism.

Belongs to the PEP-utilizing enzyme family.

This is an uncharacterized protein from Bacillus subtilis (strain 168).